Reading from the N-terminus, the 259-residue chain is Phosphoadenosine 5'-phosphosulfate reductase (259 aa).

Cysteine 244 (nucleophile; cysteine thiosulfonate intermediate) is an active-site residue.

It belongs to the PAPS reductase family. CysH subfamily.

It is found in the cytoplasm. The catalysed reaction is [thioredoxin]-disulfide + sulfite + adenosine 3',5'-bisphosphate + 2 H(+) = [thioredoxin]-dithiol + 3'-phosphoadenylyl sulfate. It participates in sulfur metabolism; hydrogen sulfide biosynthesis; sulfite from sulfate: step 3/3. Its function is as follows. Catalyzes the formation of sulfite from phosphoadenosine 5'-phosphosulfate (PAPS) using thioredoxin as an electron donor. The polypeptide is Phosphoadenosine 5'-phosphosulfate reductase (Vibrio campbellii (strain ATCC BAA-1116)).